Here is a 110-residue protein sequence, read N- to C-terminus: Large ribosomal subunit protein uL22 (110 aa).

The protein belongs to the universal ribosomal protein uL22 family. As to quaternary structure, part of the 50S ribosomal subunit.

Its function is as follows. This protein binds specifically to 23S rRNA; its binding is stimulated by other ribosomal proteins, e.g. L4, L17, and L20. It is important during the early stages of 50S assembly. It makes multiple contacts with different domains of the 23S rRNA in the assembled 50S subunit and ribosome. Functionally, the globular domain of the protein is located near the polypeptide exit tunnel on the outside of the subunit, while an extended beta-hairpin is found that lines the wall of the exit tunnel in the center of the 70S ribosome. The protein is Large ribosomal subunit protein uL22 of Exiguobacterium sp. (strain ATCC BAA-1283 / AT1b).